The following is a 137-amino-acid chain: Large-conductance mechanosensitive channel (137 aa).

2 helical membrane-spanning segments follow: residues 9-29 (AFAV…GAAF) and 79-99 (IQTI…VKAI).

Belongs to the MscL family. As to quaternary structure, homopentamer.

Its subcellular location is the cell inner membrane. In terms of biological role, channel that opens in response to stretch forces in the membrane lipid bilayer. May participate in the regulation of osmotic pressure changes within the cell. The sequence is that of Large-conductance mechanosensitive channel from Pseudomonas aeruginosa (strain UCBPP-PA14).